Consider the following 251-residue polypeptide: Plant UBX domain-containing protein 1 (251 aa).

Methionine 1 carries the post-translational modification N-acetylmethionine. The region spanning serine 104–phenylalanine 180 is the UBX domain. Positions alanine 212 to methionine 251 are disordered. Residues glutamate 217 to serine 227 are compositionally biased toward polar residues. A compositionally biased stretch (basic and acidic residues) spans valine 232–threonine 243.

In terms of assembly, interacts with CDC48A (non-hexameric) via its UBX-containing C-terminal domain.

Its subcellular location is the cytoplasm. Its function is as follows. Regulates CDC48A by inhibiting its ATPase activity and by promoting the disassembly of the active hexamer. This Arabidopsis thaliana (Mouse-ear cress) protein is Plant UBX domain-containing protein 1.